Reading from the N-terminus, the 312-residue chain is Olfactory receptor 2J2 (312 aa).

Over 1–26 (MMIKKNASSEDFFILLGFSNWPQLEV) the chain is Extracellular. N-linked (GlcNAc...) asparagine glycosylation occurs at N6. The helical transmembrane segment at 27–50 (VLFVVILIFYLMTLTGNLFIIILS) threads the bilayer. Over 51-58 (YVDSHLHT) the chain is Cytoplasmic. The helical transmembrane segment at 59 to 80 (PMYFFLSNLSFLDLCHTTSSIP) threads the bilayer. The Extracellular segment spans residues 81 to 101 (QLLVNLRGPEKTISYAGCMVQ). A disulfide bridge connects residues C98 and C190. A helical transmembrane segment spans residues 102–121 (LYFVLALGIAECVLLVVMSY). The Cytoplasmic segment spans residues 122–140 (DRYVAVCRPLHYTVLMHPR). Residues 141–159 (FCHLLAAASWVIGFTISAL) form a helical membrane-spanning segment. Residues 160 to 196 (HSSFTFWVPLCGHRLVDHFFCEVPALLRLSCVDTHAN) lie on the Extracellular side of the membrane. A helical membrane pass occupies residues 197–220 (ELTLMVMSSIFVLIPLILILTAYG). The Cytoplasmic portion of the chain corresponds to 221–237 (AIARAVLSMQSTTGLQK). The chain crosses the membrane as a helical span at residues 238–260 (VFRTCGAHLMVVSLFFIPVMCMY). At 261 to 273 (LQPPSENSPDQGK) the chain is on the extracellular side. A helical membrane pass occupies residues 274-293 (FIALFYTVVTPSLNPLIYTL). Topologically, residues 294 to 312 (RNKHVKGAAKRLLGWEWGK) are cytoplasmic.

The protein belongs to the G-protein coupled receptor 1 family.

It localises to the cell membrane. In terms of biological role, odorant receptor. The chain is Olfactory receptor 2J2 (OR2J2) from Homo sapiens (Human).